A 196-amino-acid chain; its full sequence is ATP-dependent Clp protease proteolytic subunit (196 aa).

The Nucleophile role is filled by serine 101. Histidine 126 is an active-site residue.

It belongs to the peptidase S14 family. In terms of assembly, component of the chloroplastic Clp protease core complex.

It localises to the plastid. The protein localises to the chloroplast stroma. It carries out the reaction Hydrolysis of proteins to small peptides in the presence of ATP and magnesium. alpha-casein is the usual test substrate. In the absence of ATP, only oligopeptides shorter than five residues are hydrolyzed (such as succinyl-Leu-Tyr-|-NHMec, and Leu-Tyr-Leu-|-Tyr-Trp, in which cleavage of the -Tyr-|-Leu- and -Tyr-|-Trp bonds also occurs).. Cleaves peptides in various proteins in a process that requires ATP hydrolysis. Has a chymotrypsin-like activity. Plays a major role in the degradation of misfolded proteins. The sequence is that of ATP-dependent Clp protease proteolytic subunit from Eucalyptus globulus subsp. globulus (Tasmanian blue gum).